A 488-amino-acid polypeptide reads, in one-letter code: Protein nucleotidyltransferase YdiU (488 aa).

Residues glycine 91, glycine 93, arginine 94, lysine 114, aspartate 126, glycine 127, arginine 177, and arginine 184 each coordinate ATP. Catalysis depends on aspartate 253, which acts as the Proton acceptor. Mg(2+) contacts are provided by asparagine 254 and aspartate 263. Aspartate 263 is a binding site for ATP.

Belongs to the SELO family. Requires Mg(2+) as cofactor. Mn(2+) serves as cofactor.

It catalyses the reaction L-seryl-[protein] + ATP = 3-O-(5'-adenylyl)-L-seryl-[protein] + diphosphate. The enzyme catalyses L-threonyl-[protein] + ATP = 3-O-(5'-adenylyl)-L-threonyl-[protein] + diphosphate. The catalysed reaction is L-tyrosyl-[protein] + ATP = O-(5'-adenylyl)-L-tyrosyl-[protein] + diphosphate. It carries out the reaction L-histidyl-[protein] + UTP = N(tele)-(5'-uridylyl)-L-histidyl-[protein] + diphosphate. It catalyses the reaction L-seryl-[protein] + UTP = O-(5'-uridylyl)-L-seryl-[protein] + diphosphate. The enzyme catalyses L-tyrosyl-[protein] + UTP = O-(5'-uridylyl)-L-tyrosyl-[protein] + diphosphate. Nucleotidyltransferase involved in the post-translational modification of proteins. It can catalyze the addition of adenosine monophosphate (AMP) or uridine monophosphate (UMP) to a protein, resulting in modifications known as AMPylation and UMPylation. The polypeptide is Protein nucleotidyltransferase YdiU (Bacillus cereus (strain AH187)).